The following is a 168-amino-acid chain: MLVYTDLLTGDELLSDSFPYKEIENGILWEVEGKWTTKGCVEVNIGANPSAEEGGEDEGVDDSVEKVVDIVDTFRLQEQPTYDKKGFIAYIKKYIKLLTPKLTPEQQEEFKKGIEGATKFLLPKLKDFQFFVGEGMHDDSTIVFAYYKEGATNPTFLYFAHGLKEVKC.

In terms of domain architecture, TCTP spans 1-168 (MLVYTDLLTG…FAHGLKEVKC (168 aa)).

The protein belongs to the TCTP family.

It localises to the cytoplasm. Functionally, involved in calcium binding and microtubule stabilization. In Brassica oleracea (Wild cabbage), this protein is Translationally-controlled tumor protein homolog (TCTP).